Consider the following 561-residue polypeptide: Asparagine synthetase [glutamine-hydrolyzing] (561 aa).

Cys-2 functions as the For GATase activity in the catalytic mechanism. In terms of domain architecture, Glutamine amidotransferase type-2 spans 2-191 (CGIWALFGSD…PGHYEVLDLK (190 aa)). L-glutamine contacts are provided by residues 49 to 53 (RLAVV), 75 to 77 (NGE), and Asp-97. Residues 213 to 536 (HAACDTVGNL…PGRSSWLPHY (324 aa)) enclose the Asparagine synthetase domain. ATP is bound by residues Leu-256, Ile-288, and 363 to 364 (SG).

It catalyses the reaction L-aspartate + L-glutamine + ATP + H2O = L-asparagine + L-glutamate + AMP + diphosphate + H(+). It functions in the pathway amino-acid biosynthesis; L-asparagine biosynthesis; L-asparagine from L-aspartate (L-Gln route): step 1/1. The polypeptide is Asparagine synthetase [glutamine-hydrolyzing] (ASNS) (Gallus gallus (Chicken)).